The sequence spans 810 residues: Lon protease (810 aa).

The 194-residue stretch at 8-201 folds into the Lon N-terminal domain; it reads LPLLPLRGIL…KLCGIVAKEL (194 aa). Position 353 to 360 (353 to 360) interacts with ATP; that stretch reads GPPGVGKT. A Lon proteolytic domain is found at 589–770; that stretch reads NDEVGTVTGM…DQVLAIALLE (182 aa). Catalysis depends on residues Ser-676 and Lys-719.

It belongs to the peptidase S16 family. As to quaternary structure, homohexamer. Organized in a ring with a central cavity.

It localises to the cytoplasm. The enzyme catalyses Hydrolysis of proteins in presence of ATP.. Functionally, ATP-dependent serine protease that mediates the selective degradation of mutant and abnormal proteins as well as certain short-lived regulatory proteins. Required for cellular homeostasis and for survival from DNA damage and developmental changes induced by stress. Degrades polypeptides processively to yield small peptide fragments that are 5 to 10 amino acids long. Binds to DNA in a double-stranded, site-specific manner. This chain is Lon protease, found in Desulforamulus reducens (strain ATCC BAA-1160 / DSM 100696 / MI-1) (Desulfotomaculum reducens).